Reading from the N-terminus, the 337-residue chain is Ornithine carbamoyltransferase (337 aa).

Residues 56-59 (STRT), Gln-83, Arg-107, and 134-137 (HPTQ) each bind carbamoyl phosphate. L-ornithine is bound by residues Asn-168, Asp-232, and 236–237 (SM). Carbamoyl phosphate-binding positions include 274–275 (CL) and Arg-320.

The protein belongs to the aspartate/ornithine carbamoyltransferase superfamily. OTCase family.

Its subcellular location is the cytoplasm. The enzyme catalyses carbamoyl phosphate + L-ornithine = L-citrulline + phosphate + H(+). It participates in amino-acid biosynthesis; L-arginine biosynthesis; L-arginine from L-ornithine and carbamoyl phosphate: step 1/3. Reversibly catalyzes the transfer of the carbamoyl group from carbamoyl phosphate (CP) to the N(epsilon) atom of ornithine (ORN) to produce L-citrulline. The sequence is that of Ornithine carbamoyltransferase from Shigella flexneri serotype 5b (strain 8401).